Here is a 69-residue protein sequence, read N- to C-terminus: Cold shock-like protein CspC (69 aa).

The region spanning 6–66 is the CSD domain; the sequence is GQVKWFNESK…GQKGPAAVNV (61 aa).

The protein localises to the cytoplasm. The polypeptide is Cold shock-like protein CspC (cspC) (Shigella flexneri).